A 447-amino-acid chain; its full sequence is Argininosuccinate synthase (447 aa).

Residues 17–25 (AFSGGLDTS) and alanine 43 each bind ATP. L-citrulline is bound at residue tyrosine 99. Residues glycine 129 and threonine 131 each contribute to the ATP site. Residues threonine 131, asparagine 135, and aspartate 136 each coordinate L-aspartate. Asparagine 135 provides a ligand contact to L-citrulline. Aspartate 136 contributes to the ATP binding site. Residues arginine 139 and serine 192 each coordinate L-citrulline. Aspartate 194 contributes to the ATP binding site. The L-citrulline site is built by threonine 201, glutamate 203, and glutamate 280.

Belongs to the argininosuccinate synthase family. Type 2 subfamily. Homotetramer.

Its subcellular location is the cytoplasm. It catalyses the reaction L-citrulline + L-aspartate + ATP = 2-(N(omega)-L-arginino)succinate + AMP + diphosphate + H(+). It participates in amino-acid biosynthesis; L-arginine biosynthesis; L-arginine from L-ornithine and carbamoyl phosphate: step 2/3. This is Argininosuccinate synthase (argG) from Escherichia coli O157:H7.